Reading from the N-terminus, the 125-residue chain is Scinderin (125 aa).

Y13 carries the post-translational modification Phosphotyrosine. A 1,2-diacyl-sn-glycero-3-phospho-(1D-myo-inositol-4,5-bisphosphate)-binding positions include 23–30 (KGGLKYKA) and 49–57 (RLLHVKGRR). The Gelsolin-like 1 repeat unit spans residues 59 to 99 (VRATEVPLSWDSFNKGDCFIIDLGSEIYQWFGSSCNKYERL).

This sequence belongs to the villin/gelsolin family.

It localises to the cytoplasm. Its subcellular location is the cytoskeleton. It is found in the cell projection. The protein localises to the podosome. In terms of biological role, ca(2+)-dependent actin filament-severing protein that has a regulatory function in exocytosis by affecting the organization of the microfilament network underneath the plasma membrane. In vitro, also has barbed end capping and nucleating activities in the presence of Ca(2+). Severing activity is inhibited by phosphatidylinositol 4,5-bis-phosphate (PIP2). Required for megakaryocyte differentiation, maturation, polyploidization and apoptosis with the release of platelet-like particles. Plays a role in osteoclastogenesis (OCG) and actin cytoskeletal organization in osteoclasts. Regulates chondrocyte proliferation and differentiation. Inhibits cell proliferation and tumorigenesis. Signaling is mediated by MAPK, p38 and JNK pathways. The polypeptide is Scinderin (SCIN) (Sus scrofa (Pig)).